We begin with the raw amino-acid sequence, 438 residues long: MEFKVEKKGTNKAVIEVEVEPEKFEEGLQKSYLKNAKYFKIPGFRPGKAPRSLIERAYGEEVFYDDAIDYVLNETYPKVIEESKLEVVSRPEVDIVQVGKGKSFIYKAEVYIKPEFGLGEYKGVEIKKIEYPVAEEEVEHELEHLREENARFISVDREVQNGDIVTIDFEGFVDGESIENGSAQDYELTIGSGRFIPGFEEQLIGIKKGEEKEIEVVFPEDYQSQELAGKKATFKVKVKEIKVKELPELDDEFAKDVSEYETLEELKASIRNRIKEKNDKRAKDEMIDAILEKIAQATEIDIPEPMIENQINYYVEDVVRNLQYFGMTYEKYLEAIGKTDKEFREQFRERATKAIRNNLILEKIAKVENIQATDEELEKELERLAKMYNLEVEKLKERLSEDDIEYIKEGIILNKAIDFIYENAKIISEETQSESQPE.

Residues 162 to 247 (GDIVTIDFEG…VKEIKVKELP (86 aa)) form the PPIase FKBP-type domain.

It belongs to the FKBP-type PPIase family. Tig subfamily.

The protein localises to the cytoplasm. It carries out the reaction [protein]-peptidylproline (omega=180) = [protein]-peptidylproline (omega=0). Functionally, involved in protein export. Acts as a chaperone by maintaining the newly synthesized protein in an open conformation. Functions as a peptidyl-prolyl cis-trans isomerase. The sequence is that of Trigger factor from Caldicellulosiruptor saccharolyticus (strain ATCC 43494 / DSM 8903 / Tp8T 6331).